An 846-amino-acid polypeptide reads, in one-letter code: Cap-specific mRNA (nucleoside-2'-O-)-methyltransferase 1 (846 aa).

Residues 1–81 are disordered; the sequence is MKRKSDSEQQ…LPDTLAEGSS (81 aa). The Bipartite nuclear localization signal signature appears at 2–20; the sequence is KRKSDSEQQPSVQCRKKKR. A compositionally biased stretch (polar residues) spans 27-45; sequence NLSSTSDDDTQYSNHGTQE. Residues 87–133 enclose the G-patch domain; the sequence is YNSVSQKLMAKMGFREGEGLGKFGQGRKEIVETSKQKGRRGLGMVLK. Substrate is bound by residues 203-207 and R218; that span reads KSAFD. A RrmJ-type SAM-dependent 2'-O-MTase domain is found at 231 to 450; that stretch reads FFLNRAAMKM…ERYVVCRGLK (220 aa). S-adenosyl-L-methionine is bound at residue N234. K239 is an active-site residue. S-adenosyl-L-methionine is bound by residues 277 to 283 and 335 to 336; these read CAGPGGF and DV. D364 is a catalytic residue. A substrate-binding site is contributed by 374–376; the sequence is NIQ. Residue K404 is the Proton acceptor of the active site. Position 439 (N439) interacts with substrate. One can recognise a WW domain in the interval 752–786; sequence KTINEPWSMAYSKSQKRKYFYNSKTKNSQFELPVE.

The protein resides in the nucleus. The enzyme catalyses a 5'-end (N(7)-methyl 5'-triphosphoguanosine)-ribonucleoside in mRNA + S-adenosyl-L-methionine = a 5'-end (N(7)-methyl 5'-triphosphoguanosine)-(2'-O-methyl-ribonucleoside) in mRNA + S-adenosyl-L-homocysteine + H(+). In terms of biological role, S-adenosyl-L-methionine-dependent methyltransferase that mediates mRNA cap1 2'-O-ribose methylation to the 5'-cap structure of mRNAs. Methylates the ribose of the first nucleotide of a m(7)GpppG-capped mRNA and small nuclear RNA (snRNA) to produce m(7)GpppRm (cap1). Displays a preference for cap0 transcripts. Cap1 modification is linked to higher levels of translation. May be involved in the interferon response pathway. This is Cap-specific mRNA (nucleoside-2'-O-)-methyltransferase 1 (cmtr1) from Xenopus laevis (African clawed frog).